The primary structure comprises 585 residues: Potassium-transporting ATPase potassium-binding subunit (585 aa).

A run of 12 helical transmembrane segments spans residues 23–43, 85–105, 152–172, 194–214, 275–295, 307–327, 345–365, 367–387, 397–417, 444–464, 502–522, and 547–567; these read GVII…ILSF, FINL…VIMF, FVIT…SMAF, IFDL…LAGI, VEFV…GIVF, VVMF…FAGV, AIGI…STGA, NAAL…GLLL, GVLN…LMVG, LLVV…SSFV, LDGV…LIIA, and VLLI…IIVL.

It belongs to the KdpA family. In terms of assembly, the system is composed of three essential subunits: KdpA, KdpB and KdpC.

It localises to the cell membrane. Functionally, part of the high-affinity ATP-driven potassium transport (or Kdp) system, which catalyzes the hydrolysis of ATP coupled with the electrogenic transport of potassium into the cytoplasm. This subunit binds the extracellular potassium ions and delivers the ions to the membrane domain of KdpB through an intramembrane tunnel. The chain is Potassium-transporting ATPase potassium-binding subunit from Thermoplasma acidophilum (strain ATCC 25905 / DSM 1728 / JCM 9062 / NBRC 15155 / AMRC-C165).